Consider the following 104-residue polypeptide: Large ribosomal subunit protein uL24 (104 aa).

It belongs to the universal ribosomal protein uL24 family. In terms of assembly, part of the 50S ribosomal subunit.

Functionally, one of two assembly initiator proteins, it binds directly to the 5'-end of the 23S rRNA, where it nucleates assembly of the 50S subunit. Its function is as follows. One of the proteins that surrounds the polypeptide exit tunnel on the outside of the subunit. This chain is Large ribosomal subunit protein uL24, found in Alteromonas mediterranea (strain DSM 17117 / CIP 110805 / LMG 28347 / Deep ecotype).